We begin with the raw amino-acid sequence, 84 residues long: Acyl carrier protein (84 aa).

The region spanning 1–75 is the Carrier domain; it reads MIFQKIQEFI…DILEYIQQHV (75 aa). O-(pantetheine 4'-phosphoryl)serine is present on serine 35.

The protein belongs to the acyl carrier protein (ACP) family. In terms of processing, 4'-phosphopantetheine is transferred from CoA to a specific serine of apo-ACP by AcpS. This modification is essential for activity because fatty acids are bound in thioester linkage to the sulfhydryl of the prosthetic group.

Its subcellular location is the cytoplasm. The protein operates within lipid metabolism; fatty acid biosynthesis. Its function is as follows. Carrier of the growing fatty acid chain in fatty acid biosynthesis. The chain is Acyl carrier protein from Phytoplasma mali (strain AT).